The sequence spans 153 residues: UPF0768 protein PB2B2.18 (153 aa).

Belongs to the UPF0768 family.

The protein is UPF0768 protein PB2B2.18 of Schizosaccharomyces pombe (strain 972 / ATCC 24843) (Fission yeast).